We begin with the raw amino-acid sequence, 159 residues long: Transcription elongation factor GreA (159 aa).

Residues 1–76 (MAEEKEVVLT…SLEKTLKKAR (76 aa)) are a coiled coil.

Belongs to the GreA/GreB family.

Functionally, necessary for efficient RNA polymerase transcription elongation past template-encoded arresting sites. The arresting sites in DNA have the property of trapping a certain fraction of elongating RNA polymerases that pass through, resulting in locked ternary complexes. Cleavage of the nascent transcript by cleavage factors such as GreA or GreB allows the resumption of elongation from the new 3'terminus. GreA releases sequences of 2 to 3 nucleotides. The polypeptide is Transcription elongation factor GreA (Syntrophomonas wolfei subsp. wolfei (strain DSM 2245B / Goettingen)).